The sequence spans 212 residues: Ras-related protein Rab-15 (212 aa).

Positions 17, 18, 19, 20, 21, 22, 23, 35, 39, and 40 each coordinate GTP. A Mg(2+)-binding site is contributed by Thr-22. 2 short sequence motifs (switch) span residues 31 to 45 and 63 to 80; these read NEFHSSHISTIGVDF and DTAGQERYQTITKQYYRR. Mg(2+) contacts are provided by Thr-40 and Asp-63. Positions 66, 121, 122, 124, 151, and 152 each coordinate GTP. Residues 192-212 form a disordered region; that stretch reads ELEEDEGKPEGPANSSKTCWC. Residues Cys-210 and Cys-212 are each lipidated (S-geranylgeranyl cysteine). Cys-212 carries the post-translational modification Cysteine methyl ester.

The protein belongs to the small GTPase superfamily. Rab family. As to quaternary structure, the GTP bound form of RAB15 interacts with REP15. Interacts (GTP-bound form) with MICAL1, MICAL3, MICALCL, EHBP1 and EHBP1L1. Requires Mg(2+) as cofactor.

The protein localises to the cell membrane. It carries out the reaction GTP + H2O = GDP + phosphate + H(+). With respect to regulation, regulated by guanine nucleotide exchange factors (GEFs) which promote the exchange of bound GDP for free GTP. Regulated by GTPase activating proteins (GAPs) which increase the GTP hydrolysis activity. Inhibited by GDP dissociation inhibitors (GDIs). Functionally, the small GTPases Rab are key regulators of intracellular membrane trafficking, from the formation of transport vesicles to their fusion with membranes. Rabs cycle between an inactive GDP-bound form and an active GTP-bound form that is able to recruit to membranes different sets of downstream effectors directly responsible for vesicle formation, movement, tethering and fusion. RAB15 may act in concert with RAB3A in regulating aspects of synaptic vesicle membrane flow within the nerve terminal. This Bos taurus (Bovine) protein is Ras-related protein Rab-15 (RAB15).